Here is a 120-residue protein sequence, read N- to C-terminus: Large ribosomal subunit protein bL20 (120 aa).

This sequence belongs to the bacterial ribosomal protein bL20 family.

Its function is as follows. Binds directly to 23S ribosomal RNA and is necessary for the in vitro assembly process of the 50S ribosomal subunit. It is not involved in the protein synthesizing functions of that subunit. The polypeptide is Large ribosomal subunit protein bL20 (Ligilactobacillus salivarius (strain UCC118) (Lactobacillus salivarius)).